Here is a 397-residue protein sequence, read N- to C-terminus: MEREKVVLAYSGGLDTSVAIKWLMQKYSLDVITLTVDIGQGIDLNEIKNKAENLGVEKAYVLDLREEFIKDYIIPAIKSNAMYERVYPLATALSRPLIAKYLVKVAKENGAKYVAHGCTGKGNDQVRIDLGVKALAPDLEIIAPVREWNFSREEEIEYAIENNIPIPVSRKNPYSIDENLWGRSIEGGILEDPWQEPPEDIYLWTKLENKEPSYIEITFEKGIPVKLNGVEKDLVGLIEELNKIAGSYGIGRIDHIENRLVGIKSREIYEAPAALVIIKAHEALEDLVLPRELAHFKRMLEDKYAELVYYGLWFDPFREALQAFMDKTQERVTGKVKIKLIPWSFSIVGRDSPYSLYDHSLATYDKGSTFSTESAVGFIKLFGLQNYLYALKGGKNA.

Residue 9–17 (AYSGGLDTS) coordinates ATP. Tyrosine 87 serves as a coordination point for L-citrulline. Glycine 117 contacts ATP. Threonine 119, asparagine 123, and aspartate 124 together coordinate L-aspartate. Residue asparagine 123 coordinates L-citrulline. L-citrulline contacts are provided by arginine 127, serine 175, serine 184, glutamate 257, and tyrosine 269.

This sequence belongs to the argininosuccinate synthase family. Type 1 subfamily. In terms of assembly, homotetramer.

The protein localises to the cytoplasm. It catalyses the reaction L-citrulline + L-aspartate + ATP = 2-(N(omega)-L-arginino)succinate + AMP + diphosphate + H(+). Its pathway is amino-acid biosynthesis; L-arginine biosynthesis; L-arginine from L-ornithine and carbamoyl phosphate: step 2/3. In Dictyoglomus turgidum (strain DSM 6724 / Z-1310), this protein is Argininosuccinate synthase.